Reading from the N-terminus, the 158-residue chain is Cyclic pyranopterin monophosphate synthase (158 aa).

Residues 76 to 78 (LCH) and 114 to 115 (ME) contribute to the substrate site. The active site involves D129.

It belongs to the MoaC family. In terms of assembly, homohexamer; trimer of dimers.

The catalysed reaction is (8S)-3',8-cyclo-7,8-dihydroguanosine 5'-triphosphate = cyclic pyranopterin phosphate + diphosphate. It participates in cofactor biosynthesis; molybdopterin biosynthesis. Its function is as follows. Catalyzes the conversion of (8S)-3',8-cyclo-7,8-dihydroguanosine 5'-triphosphate to cyclic pyranopterin monophosphate (cPMP). This is Cyclic pyranopterin monophosphate synthase from Shewanella baltica (strain OS155 / ATCC BAA-1091).